A 702-amino-acid polypeptide reads, in one-letter code: Autophagy-related protein 9 (702 aa).

Residues 1 to 205 lie on the Cytoplasmic side of the membrane; the sequence is MFYQPAQNKK…GKGLSCIIVH (205 aa). Positions 35–128 are disordered; that stretch reads QESLDSDEDE…SKQKPALPNF (94 aa). Residues 38–47 show a composition bias toward acidic residues; the sequence is LDSDEDESSP. Residues 94–107 are compositionally biased toward low complexity; sequence SSKVPSKHPSPSFP. Positions 108–120 are enriched in polar residues; the sequence is ETTSLRNLQNGSK. The chain crosses the membrane as a helical span at residues 206–223; it reads RLFQILTVSFVIGFTTFI. Residues 224 to 251 are Lumenal-facing; sequence TSCIDWPAVTPHGSLAGVTKSQCIAQMS. A helical membrane pass occupies residues 252 to 270; that stretch reads PITYLVLWLFLSFLLALWI. Residues 271–421 are Cytoplasmic-facing; sequence YYLTDIPRLW…RRRFIVAGFL (151 aa). Residues 422–446 lie within the membrane without spanning it; that stretch reads NCLFAPIVAIYLVIHNFFRYFNEYH. The Cytoplasmic portion of the chain corresponds to 447-496; it reads KNPGALSTRRYTPLALWTFREYNELQHFFDERINDSYAAASHYVSQFPDF. The helical transmembrane segment at 497 to 522 threads the bilayer; that stretch reads NMIRLFKYISFILGSFTAILVIITVF. The Lumenal segment spans residues 523–537; that stretch reads DPELMVTFEITKDRS. Residues 538–555 traverse the membrane as a helical segment; it reads VLFYLGLFGSLIAVSRSI. Residues 556–603 lie on the Cytoplasmic side of the membrane; it reads IPDETLVFAPEKALRRVITFTHYMPGWWSDNMHSKAVQQEFCSLYSYR. An intramembrane segment occupies 604–624; it reads IVNLLWEILGILLTPVLLFFT. The Cytoplasmic portion of the chain corresponds to 625 to 702; it reads FPSCSQDIVD…NTEAPRRDLR (78 aa).

Belongs to the ATG9 family. In terms of assembly, homotrimer; forms a homotrimer with a central pore that forms a path between the two membrane leaflets. Interacts with ctl1. In terms of processing, phosphorylated by atg1. Atg1 phosphorylation is required for preautophagosome elongation.

It is found in the preautophagosomal structure membrane. It localises to the cytoplasmic vesicle membrane. The protein resides in the golgi apparatus membrane. Its subcellular location is the endoplasmic reticulum membrane. It catalyses the reaction a 1,2-diacyl-sn-glycero-3-phosphocholine(in) = a 1,2-diacyl-sn-glycero-3-phosphocholine(out). The catalysed reaction is a 1,2-diacyl-sn-glycero-3-phospho-L-serine(in) = a 1,2-diacyl-sn-glycero-3-phospho-L-serine(out). The enzyme catalyses a 1,2-diacyl-sn-glycero-3-phosphoethanolamine(in) = a 1,2-diacyl-sn-glycero-3-phosphoethanolamine(out). It carries out the reaction a 1,2-diacyl-sn-glycero-3-phospho-(1D-myo-inositol-3-phosphate)(in) = a 1,2-diacyl-sn-glycero-3-phospho-(1D-myo-inositol-3-phosphate)(out). Its function is as follows. Phospholipid scramblase involved in autophagy and cytoplasm to vacuole transport (Cvt) vesicle formation. Cycles between the preautophagosomal structure/phagophore assembly site (PAS) and the cytoplasmic vesicle pool and supplies membrane for the growing autophagosome. Lipid scramblase activity plays a key role in preautophagosomal structure/phagophore assembly by distributing the phospholipids that arrive through atg2 from the cytoplasmic to the luminal leaflet of the bilayer, thereby driving autophagosomal membrane expansion. Also involved in endoplasmic reticulum-specific autophagic process and is essential for the survival of cells subjected to severe ER stress. Different machineries are required for anterograde trafficking to the PAS during either the Cvt pathway or bulk autophagy and for retrograde trafficking. Has a role in meiosis and sporulation. The polypeptide is Autophagy-related protein 9 (Schizosaccharomyces pombe (strain 972 / ATCC 24843) (Fission yeast)).